The primary structure comprises 361 residues: UDP-3-O-acylglucosamine N-acyltransferase (361 aa).

H253 serves as the catalytic Proton acceptor.

This sequence belongs to the transferase hexapeptide repeat family. LpxD subfamily. In terms of assembly, homotrimer.

It catalyses the reaction a UDP-3-O-[(3R)-3-hydroxyacyl]-alpha-D-glucosamine + a (3R)-hydroxyacyl-[ACP] = a UDP-2-N,3-O-bis[(3R)-3-hydroxyacyl]-alpha-D-glucosamine + holo-[ACP] + H(+). Its pathway is bacterial outer membrane biogenesis; LPS lipid A biosynthesis. Functionally, catalyzes the N-acylation of UDP-3-O-acylglucosamine using 3-hydroxyacyl-ACP as the acyl donor. Is involved in the biosynthesis of lipid A, a phosphorylated glycolipid that anchors the lipopolysaccharide to the outer membrane of the cell. This is UDP-3-O-acylglucosamine N-acyltransferase from Burkholderia pseudomallei (strain 668).